A 73-amino-acid polypeptide reads, in one-letter code: Large ribosomal subunit protein bL31 (73 aa).

4 residues coordinate Zn(2+): cysteine 16, cysteine 18, cysteine 37, and cysteine 40.

It belongs to the bacterial ribosomal protein bL31 family. Type A subfamily. As to quaternary structure, part of the 50S ribosomal subunit. The cofactor is Zn(2+).

Functionally, binds the 23S rRNA. The protein is Large ribosomal subunit protein bL31 of Marinobacter nauticus (strain ATCC 700491 / DSM 11845 / VT8) (Marinobacter aquaeolei).